The following is a 268-amino-acid chain: Phosphate import ATP-binding protein PstB 2 (268 aa).

In terms of domain architecture, ABC transporter spans 22 to 263; the sequence is MALTGVNFYY…PKVKRTEDYI (242 aa). 54-61 contributes to the ATP binding site; that stretch reads GPSGCGKS.

Belongs to the ABC transporter superfamily. Phosphate importer (TC 3.A.1.7) family. The complex is composed of two ATP-binding proteins (PstB), two transmembrane proteins (PstC and PstA) and a solute-binding protein (PstS).

It localises to the cell inner membrane. It carries out the reaction phosphate(out) + ATP + H2O = ADP + 2 phosphate(in) + H(+). Part of the ABC transporter complex PstSACB involved in phosphate import. Responsible for energy coupling to the transport system. In Rhizobium johnstonii (strain DSM 114642 / LMG 32736 / 3841) (Rhizobium leguminosarum bv. viciae), this protein is Phosphate import ATP-binding protein PstB 2.